We begin with the raw amino-acid sequence, 468 residues long: V-type proton ATPase subunit S1 (468 aa).

The N-terminal stretch at 1 to 35 (MMAATAAAQVRAGTRWAPALCRMPWLPLMLVAAAA) is a signal peptide. A propeptide spanning residues 36-228 (ATSEQQVPLV…TAVRPSRVAR (193 aa)) is cleaved from the precursor. The Lumenal portion of the chain corresponds to 36–417 (ATSEQQVPLV…KKFSYASDCA (382 aa)). Asn-167, Asn-258, Asn-271, Asn-294, Asn-301, Asn-348, Asn-355, and Asn-404 each carry an N-linked (GlcNAc...) asparagine glycan. The cysteines at positions 369 and 416 are disulfide-linked. A helical membrane pass occupies residues 418–438 (GFFSPGIWMGLLTSLFMLFIF). At 439–468 (TYGLHMILSLKTMDRFDDHKGPTITLTQIV) the chain is on the cytoplasmic side.

The protein belongs to the vacuolar ATPase subunit S1 family. Accessory component of the multisubunit proton-transporting vacuolar (V)-ATPase protein pump. Interacts (via N-terminus) with ATP6AP2 (via N-terminus). Interacts with RNASEK. Interacts with TMEM106B (via C-terminus). N-glycosylated.

It is found in the endoplasmic reticulum membrane. Its subcellular location is the endoplasmic reticulum-Golgi intermediate compartment membrane. The protein localises to the cytoplasmic vesicle. It localises to the secretory vesicle. The protein resides in the synaptic vesicle membrane. It is found in the clathrin-coated vesicle membrane. Functionally, accessory subunit of the proton-transporting vacuolar (V)-ATPase protein pump, which is required for luminal acidification of secretory vesicles. Guides the V-type ATPase into specialized subcellular compartments, such as neuroendocrine regulated secretory vesicles or the ruffled border of the osteoclast, thereby regulating its activity. Involved in membrane trafficking and Ca(2+)-dependent membrane fusion. May play a role in the assembly of the V-type ATPase complex. In aerobic conditions, involved in intracellular iron homeostasis, thus triggering the activity of Fe(2+) prolyl hydroxylase (PHD) enzymes, and leading to HIF1A hydroxylation and subsequent proteasomal degradation. In islets of Langerhans cells, may regulate the acidification of dense-core secretory granules. The protein is V-type proton ATPase subunit S1 (ATP6AP1) of Bos taurus (Bovine).